A 249-amino-acid chain; its full sequence is MEAAADGPAETRSRVEKDSRRAKKDSPAKTQSPAQDTSIMLRNNADTGKVPALPEHKKKRKGYLPAESVKILRDWMYKHRFRAYPSEAEKRMLSKKTNLSLSQISNWFINARRRILPDMLQRRGNDPIVGHKTGKDAHATHLRSTDASVPAKSGPRGSDNVQSLPLRSSPKGQMSGEKIPEPGSAPSQKLTVIAQPKKKVKVSNITSLSSPERVSTEEYADFSSFQLLVDAAVQRAAELELEKKQESNP.

Disordered stretches follow at residues 1-62 and 126-192; these read MEAA…KRKG and DPIV…KLTV. A compositionally biased stretch (basic and acidic residues) spans 9–27; the sequence is AETRSRVEKDSRRAKKDSP. Polar residues predominate over residues 28 to 46; that stretch reads AKTQSPAQDTSIMLRNNAD. A DNA-binding region (homeobox; TALE-type) is located at residues 55–118; that stretch reads EHKKKRKGYL…INARRRILPD (64 aa). Residues 159–172 show a composition bias toward polar residues; sequence DNVQSLPLRSSPKG.

The protein belongs to the TALE/TGIF homeobox family.

It is found in the nucleus. May have a transcription role in testis. The chain is Homeobox protein TGIF2LX (TGIF2LX) from Macaca fascicularis (Crab-eating macaque).